A 76-amino-acid polypeptide reads, in one-letter code: ATP synthase subunit c (76 aa).

The next 2 membrane-spanning stretches (helical) occupy residues 12–32 (LGSIGYGLAAIGPGVGVGIIF) and 54–74 (ILGFAFCEALALIGLVMPFVY).

It belongs to the ATPase C chain family. As to quaternary structure, F-type ATPases have 2 components, F(1) - the catalytic core - and F(0) - the membrane proton channel. F(1) has five subunits: alpha(3), beta(3), gamma(1), delta(1), epsilon(1). F(0) has three main subunits: a(1), b(2) and c(10-14). The alpha and beta chains form an alternating ring which encloses part of the gamma chain. F(1) is attached to F(0) by a central stalk formed by the gamma and epsilon chains, while a peripheral stalk is formed by the delta and b chains.

The protein resides in the cell membrane. Functionally, f(1)F(0) ATP synthase produces ATP from ADP in the presence of a proton or sodium gradient. F-type ATPases consist of two structural domains, F(1) containing the extramembraneous catalytic core and F(0) containing the membrane proton channel, linked together by a central stalk and a peripheral stalk. During catalysis, ATP synthesis in the catalytic domain of F(1) is coupled via a rotary mechanism of the central stalk subunits to proton translocation. Its function is as follows. Key component of the F(0) channel; it plays a direct role in translocation across the membrane. A homomeric c-ring of between 10-14 subunits forms the central stalk rotor element with the F(1) delta and epsilon subunits. The polypeptide is ATP synthase subunit c (Streptomyces coelicolor (strain ATCC BAA-471 / A3(2) / M145)).